The sequence spans 122 residues: RING-box protein 1B (122 aa).

The segment covering 1-23 has biased composition (acidic residues); sequence MAEEIEVEETEDFHDMDFNDEEP. Residues 1 to 28 form a disordered region; that stretch reads MAEEIEVEETEDFHDMDFNDEEPSCSGG. The Zn(2+) site is built by Cys57, Cys60, Cys68, Cys71, Cys82, Cys89, His91, His94, His96, Cys108, and Asp111. The segment at 57–112 adopts an RING-type zinc-finger fold; it reads CAICRNHIMNLCIECQADPNANQDECTVAWGECNHAFHYHCIARWLKTRLVCPLDN.

The protein belongs to the RING-box family. As to quaternary structure, part of a SCF complex consisting of Skpa (SKP1), Cul1, Roc1B and a F-box protein. As to expression, highly expressed in early embryos, and in pupae. Widely expressed in adult males, while it is weakly expressed in adult females.

It localises to the cytoplasm. Its subcellular location is the nucleus. The protein operates within protein modification; protein ubiquitination. Functionally, component of the SCF (SKP1-CUL1-F-box protein) E3 ubiquitin ligase complex, which mediates the ubiquitination and subsequent proteasomal degradation of target proteins. Through the RING-type zinc finger, seems to recruit the E2 ubiquitination enzyme to the complex and brings it into close proximity to the substrate. This Drosophila melanogaster (Fruit fly) protein is RING-box protein 1B (Roc1b).